The following is a 333-amino-acid chain: NADH dehydrogenase (ubiquinone) complex I, assembly factor 6 (333 aa).

The N-terminal 44 residues, 1-44 (MAASTLGSAWGPLRLGVPGLCRRRPPRGLWARARRLSEPVASGR), are a transit peptide targeting the mitochondrion.

The protein belongs to the NDUFAF6 family.

The protein resides in the mitochondrion inner membrane. In terms of biological role, involved in the assembly of mitochondrial NADH:ubiquinone oxidoreductase complex (complex I) at early stages. May play a role in the biogenesis of complex I subunit MT-ND1. In Bos taurus (Bovine), this protein is NADH dehydrogenase (ubiquinone) complex I, assembly factor 6 (NDUFAF6).